A 242-amino-acid polypeptide reads, in one-letter code: Small ribosomal subunit protein uS2 (242 aa).

Belongs to the universal ribosomal protein uS2 family.

The polypeptide is Small ribosomal subunit protein uS2 (Vibrio vulnificus (strain CMCP6)).